The primary structure comprises 288 residues: MYYVNVILYLLEVLKPKIILGNLLSLYGGYGVAARGHIYSKLLFLDSLSLFLIVGSACVLNNVIDCDIDKIMLRTQCRLLVKYNKFCKLAILIAMFMLFLGLILCVKFINVVCFCLFLLGWLTYIFLYSFFLKKTSAISTIVGSISGSLPPIVGYCSVTNNFDFCSLNLLIMFALWQIPHSYAICILHFRDYKIANIPVFPVIYGFKITRYHIILHIILFFISVIVLTFINSINYKFLIISFFLCLTWLYYSLLELTIKNSKLWAKNIFRWSIIVIFLLNIIMLFGFV.

Helical transmembrane passes span 6-26 (VILYLLEVLKPKIILGNLLSL), 44-64 (FLDSLSLFLIVGSACVLNNVI), 89-109 (LAILIAMFMLFLGLILCVKFI), 111-131 (VVCFCLFLLGWLTYIFLYSFF), 138-158 (ISTIVGSISGSLPPIVGYCSV), 169-189 (LLIMFALWQIPHSYAICILHF), 213-233 (IILHIILFFISVIVLTFINSI), 238-258 (LIISFFLCLTWLYYSLLELTI), and 268-288 (IFRWSIIVIFLLNIIMLFGFV).

Belongs to the UbiA prenyltransferase family. Protoheme IX farnesyltransferase subfamily.

It is found in the cell membrane. It carries out the reaction heme b + (2E,6E)-farnesyl diphosphate + H2O = Fe(II)-heme o + diphosphate. It participates in porphyrin-containing compound metabolism; heme O biosynthesis; heme O from protoheme: step 1/1. Its function is as follows. Converts heme B (protoheme IX) to heme O by substitution of the vinyl group on carbon 2 of heme B porphyrin ring with a hydroxyethyl farnesyl side group. This chain is Protoheme IX farnesyltransferase, found in Buchnera aphidicola subsp. Baizongia pistaciae (strain Bp).